An 88-amino-acid chain; its full sequence is Small ribosomal subunit protein bS16 (88 aa).

It belongs to the bacterial ribosomal protein bS16 family.

The sequence is that of Small ribosomal subunit protein bS16 from Symbiobacterium thermophilum (strain DSM 24528 / JCM 14929 / IAM 14863 / T).